A 255-amino-acid polypeptide reads, in one-letter code: Methanethiol S-methyltransferase (255 aa).

A run of 5 helical transmembrane segments spans residues 16–36 (FVLLYGVFCYFTFLLTCVYAV), 56–76 (LVTALLIDVGLLGIFALQHSV), 99–119 (YVLFSSLALMLVFWQWHPIGI), 131–151 (IIFYSLFALGWVIVLVSTFLI), and 191–211 (VGWFLVFWMTPIMTVAHLVFA).

This sequence belongs to the nurim family.

It is found in the membrane. It carries out the reaction methanethiol + S-adenosyl-L-methionine = dimethyl sulfide + S-adenosyl-L-homocysteine + H(+). Catalyzes the methylation of methanethiol (MeSH) to yield dimethylsulphide (DMS). The sequence is that of Methanethiol S-methyltransferase from Crocosphaera subtropica (strain ATCC 51142 / BH68) (Cyanothece sp. (strain ATCC 51142)).